Here is a 139-residue protein sequence, read N- to C-terminus: Nuclear receptor 2C2-associated protein (139 aa).

Belongs to the NR2C2AP family. As to quaternary structure, interacts with NR2C2/TR4. Expressed in all tissues examined, with highest expression in heart, skeletal muscle and pancreas.

The protein resides in the nucleus. In terms of biological role, may act as a repressor of NR2C2-mediated transactivation by suppressing the binding between NR2C2/TR4 and the TR4-response element in target genes. The sequence is that of Nuclear receptor 2C2-associated protein (NR2C2AP) from Homo sapiens (Human).